Here is a 321-residue protein sequence, read N- to C-terminus: Glycerol-3-phosphate dehydrogenase [NAD(P)+] (321 aa).

NADPH-binding residues include serine 14, phenylalanine 15, arginine 35, and lysine 109. The sn-glycerol 3-phosphate site is built by lysine 109 and glycine 137. NADPH is bound at residue alanine 141. Residues lysine 192, aspartate 252, serine 262, arginine 263, and asparagine 264 each contribute to the sn-glycerol 3-phosphate site. Lysine 192 (proton acceptor) is an active-site residue. Arginine 263 serves as a coordination point for NADPH. Leucine 287 and glutamate 289 together coordinate NADPH.

This sequence belongs to the NAD-dependent glycerol-3-phosphate dehydrogenase family.

Its subcellular location is the cytoplasm. It carries out the reaction sn-glycerol 3-phosphate + NAD(+) = dihydroxyacetone phosphate + NADH + H(+). The enzyme catalyses sn-glycerol 3-phosphate + NADP(+) = dihydroxyacetone phosphate + NADPH + H(+). It participates in membrane lipid metabolism; glycerophospholipid metabolism. Catalyzes the reduction of the glycolytic intermediate dihydroxyacetone phosphate (DHAP) to sn-glycerol 3-phosphate (G3P), the key precursor for phospholipid synthesis. This is Glycerol-3-phosphate dehydrogenase [NAD(P)+] from Rickettsia felis (strain ATCC VR-1525 / URRWXCal2) (Rickettsia azadi).